Consider the following 709-residue polypeptide: ATP-dependent zinc metalloprotease YME1 homolog (709 aa).

Residues 152-182 (FTSDTSSTVSSTPSLNHSLQNSMPPSTPTPP) are disordered. The span at 153–165 (TSDTSSTVSSTPS) shows a compositional bias: low complexity. The helical transmembrane segment at 217-239 (IFKFIAGLSVASYFVLLGMSIFA) threads the bilayer. ATP is bound at residue 307–314 (GPPGTGKT). Position 530 (histidine 530) interacts with Zn(2+). Glutamate 531 is a catalytic residue. Zn(2+) contacts are provided by histidine 534 and aspartate 608.

The protein in the N-terminal section; belongs to the AAA ATPase family. It in the C-terminal section; belongs to the peptidase M41 family. It depends on Zn(2+) as a cofactor.

It is found in the mitochondrion membrane. Functionally, putative ATP-dependent protease. The sequence is that of ATP-dependent zinc metalloprotease YME1 homolog from Schizosaccharomyces pombe (strain 972 / ATCC 24843) (Fission yeast).